The sequence spans 136 residues: Antistasin (136 aa).

Positions 1-17 (MIKLAILLLFTVAIVRC) are cleaved as a signal peptide. The residue at position 18 (Gln-18) is a Pyrrolidone carboxylic acid. Disulfide bonds link Cys-25-Cys-36, Cys-30-Cys-43, Cys-45-Cys-65, Cys-50-Cys-68, Cys-54-Cys-70, Cys-79-Cys-90, Cys-84-Cys-97, Cys-99-Cys-120, Cys-105-Cys-123, and Cys-109-Cys-125. The region spanning 45 to 70 (CSGVRCRMHCPHGFQRSRYGCEFCKC) is the Antistasin-like 1 domain. The region spanning 100–125 (KIDINCRKTCPNGLKRDKLGCEYCEC) is the Antistasin-like 2 domain. Heparin contacts are provided by residues 114-117 (KRDK) and 128-135 (KRKLIPRL).

It belongs to the protease inhibitor I15 (antistasin) family.

Its subcellular location is the secreted. Its function is as follows. This highly disulfide-bonded protein is a potent inhibitor of factor Xa. May have therapeutic utility as an anticoagulant. Also exhibits a strong metastatic activity. In Haementeria officinalis (Mexican leech), this protein is Antistasin.